An 832-amino-acid polypeptide reads, in one-letter code: Protein PPP4R3C (832 aa).

Positions 708-832 (RTQEGEAVMP…SPKKKPHLSS (125 aa)) are disordered. Basic and acidic residues-rich tracts occupy residues 725–735 (FTETKRTHQEG) and 749–765 (METK…DSPK). Positions 769–779 (SGDFKFSSSYS) are enriched in low complexity. A compositionally biased stretch (acidic residues) spans 801–820 (PDDEEEKEEDEEEKEEDKED).

It belongs to the SMEK family.

The sequence is that of Protein PPP4R3C from Homo sapiens (Human).